Reading from the N-terminus, the 194-residue chain is Ras-related protein Rab-22A (194 aa).

Position 12-20 (12-20) interacts with GTP; that stretch reads GDTGVGKSS. The short motif at 34 to 42 is the Effector region element; the sequence is INPTIGASF. Residues 60–64, 118–121, and 148–150 each bind GTP; these read DTAGQ, NKCD, and SAK. The tract at residues 174-194 is disordered; that stretch reads PSGGKGFKLRRQPSEPKRSCC. The span at 185–194 shows a compositional bias: basic and acidic residues; the sequence is QPSEPKRSCC. 2 S-geranylgeranyl cysteine lipidation sites follow: Cys193 and Cys194.

The protein belongs to the small GTPase superfamily. Rab family. Interacts directly with ZFYVE20. Binds EEA1. Interacts (in its GTP-bound form) with RABGEF1. Interacts (in its GTP-bound form) with RINL.

Its subcellular location is the endosome membrane. The protein resides in the cell membrane. It is found in the early endosome. It localises to the late endosome. The protein localises to the cell projection. Its subcellular location is the ruffle. The protein resides in the cytoplasmic vesicle. It is found in the phagosome. It localises to the phagosome membrane. Plays a role in endocytosis and intracellular protein transport. Mediates trafficking of TF from early endosomes to recycling endosomes. Required for NGF-mediated endocytosis of NTRK1, and subsequent neurite outgrowth. Binds GTP and GDP and has low GTPase activity. Alternates between a GTP-bound active form and a GDP-bound inactive form. This is Ras-related protein Rab-22A (RAB22A) from Homo sapiens (Human).